We begin with the raw amino-acid sequence, 235 residues long: Phosphoribosylaminoimidazole-succinocarboxamide synthase (235 aa).

Belongs to the SAICAR synthetase family.

The enzyme catalyses 5-amino-1-(5-phospho-D-ribosyl)imidazole-4-carboxylate + L-aspartate + ATP = (2S)-2-[5-amino-1-(5-phospho-beta-D-ribosyl)imidazole-4-carboxamido]succinate + ADP + phosphate + 2 H(+). The protein operates within purine metabolism; IMP biosynthesis via de novo pathway; 5-amino-1-(5-phospho-D-ribosyl)imidazole-4-carboxamide from 5-amino-1-(5-phospho-D-ribosyl)imidazole-4-carboxylate: step 1/2. In Prosthecochloris aestuarii (strain DSM 271 / SK 413), this protein is Phosphoribosylaminoimidazole-succinocarboxamide synthase.